The primary structure comprises 402 residues: Zinc finger CCHC domain-containing protein 12 (402 aa).

The tract at residues Ile-308–Arg-341 is disordered. Polar residues predominate over residues Pro-311–Ser-322. A CCHC-type zinc finger spans residues Ile-345–Asn-362.

This sequence belongs to the ZCCHC12 family. In terms of assembly, interacts with SMAD1 and CREB-binding protein (CBP). Forms a protein-DNA complex through its association with SMAD1.

Functionally, transcriptional coactivator in the bone morphogenetic protein (BMP)-signaling pathway. It positively modulates BMP signaling by interacting with SMAD1 and associating with CBP in the transcription complex. It contributes to the BMP-induced enhancement of cholinergic-neuron-specific gene expression. The polypeptide is Zinc finger CCHC domain-containing protein 12 (ZCCHC12) (Homo sapiens (Human)).